Here is a 930-residue protein sequence, read N- to C-terminus: Translation initiation factor IF-2 (930 aa).

Low complexity predominate over residues 50 to 67 (FKPAAAPKVEAKPAAPKV). 2 disordered regions span residues 50 to 217 (FKPA…SSEE) and 260 to 346 (EVVP…HELP). 2 stretches are compositionally biased toward basic and acidic residues: residues 68-90 (SAEKKAEKSEPAKPAVAKEEAKP) and 110-125 (FKAEREARAKEQAERR). Positions 129 to 141 (KGNNRDQQQNGNR) are enriched in low complexity. Basic and acidic residues-rich tracts occupy residues 157-167 (RDNRRFNDQAK) and 262-295 (VPEKKEPAVDTRRKKQARPDKNRDDYDHEEDGPR). Positions 309 to 318 (NQKNSNWNNN) are enriched in low complexity. Positions 337-346 (VTERKFHELP) are enriched in basic and acidic residues. The tr-type G domain maps to 432–599 (ERPPVVTIMG…TVLLVAEIQE (168 aa)). Positions 441–448 (GHVDHGKT) are G1. GTP is bound at residue 441 to 448 (GHVDHGKT). The segment at 466–470 (GITQH) is G2. Residues 487–490 (DTPG) are G3. GTP is bound by residues 487–491 (DTPGH) and 541–544 (NKID). Positions 541 to 544 (NKID) are G4. Residues 577–579 (SAK) are G5.

This sequence belongs to the TRAFAC class translation factor GTPase superfamily. Classic translation factor GTPase family. IF-2 subfamily.

It localises to the cytoplasm. Its function is as follows. One of the essential components for the initiation of protein synthesis. Protects formylmethionyl-tRNA from spontaneous hydrolysis and promotes its binding to the 30S ribosomal subunits. Also involved in the hydrolysis of GTP during the formation of the 70S ribosomal complex. The chain is Translation initiation factor IF-2 from Streptococcus pneumoniae (strain CGSP14).